Consider the following 386-residue polypeptide: Patatin-B1 (386 aa).

An N-terminal signal peptide occupies residues 1 to 23 (MATTKSFLILFFMILATTSSTCA). The PNPLA domain maps to 32-229 (LSIDGGGIKG…TVGDPALLSL (198 aa)). The GXGXXG signature appears at 36-41 (GGGIKG). A GXSXG motif is present at residues 75–79 (GTSTG). The active-site Nucleophile is the S77. Residue N115 is glycosylated (N-linked (GlcNAc...) asparagine). D215 acts as the Proton acceptor in catalysis. Residues 215–217 (DGG) carry the DGA/G motif.

It belongs to the patatin family.

It is found in the vacuole. Probable lipolytic acyl hydrolase (LAH), an activity which is thought to be involved in the response of tubers to pathogens. The chain is Patatin-B1 (PATB1) from Solanum tuberosum (Potato).